A 262-amino-acid chain; its full sequence is ATP synthase subunit a (262 aa).

Transmembrane regions (helical) follow at residues 32–52 (IAFT…AVFV), 98–118 (LFMF…VLGI), 127–147 (FTIT…VGFW), 153–173 (FFSL…IFPI), 189–209 (LFVA…FVID), and 219–239 (LLVG…EILV).

Belongs to the ATPase A chain family. F-type ATPases have 2 components, CF(1) - the catalytic core - and CF(0) - the membrane proton channel. CF(1) has five subunits: alpha(3), beta(3), gamma(1), delta(1), epsilon(1). CF(0) has four main subunits: a, b, b' and c.

It is found in the cell inner membrane. Key component of the proton channel; it plays a direct role in the translocation of protons across the membrane. The protein is ATP synthase subunit a of Erythrobacter litoralis (strain HTCC2594).